The primary structure comprises 653 residues: Sulfate transporter 1.2 (653 aa).

The segment at Met-1 to Val-30 is disordered. The Cytoplasmic portion of the chain corresponds to Met-1 to Arg-91. A helical transmembrane segment spans residues Gly-92–Ala-112. Topologically, residues Lys-113 to Asn-116 are extracellular. Residues Leu-117 to Gly-137 form a helical membrane-spanning segment. The Cytoplasmic segment spans residues Ser-138–Asp-141. Residues Ile-142 to Ile-162 form a helical membrane-spanning segment. Over Asp-163–Arg-173 the chain is Extracellular. The next 2 helical transmembrane spans lie at Leu-174 to Leu-194 and Gly-195 to Ile-215. Residues Thr-216–Asn-253 are Extracellular-facing. Residues Trp-254–Gly-274 form a helical membrane-spanning segment. At Lys-275–Leu-280 the chain is on the cytoplasmic side. A helical membrane pass occupies residues Phe-281–Ile-301. The Extracellular portion of the chain corresponds to Thr-302–Arg-339. A helical transmembrane segment spans residues Ile-340 to Ala-360. Over Ala-361 to Glu-372 the chain is Cytoplasmic. A helical transmembrane segment spans residues Met-373–Gly-393. Residues Ser-394–Ala-409 are Extracellular-facing. Residues Val-410 to Phe-430 traverse the membrane as a helical segment. Residues Lys-431–Leu-438 are Cytoplasmic-facing. A helical membrane pass occupies residues Ala-439–Phe-459. Over Lys-460 to Phe-466 the chain is Extracellular. The helical transmembrane segment at Ile-467 to Ile-487 threads the bilayer. Topologically, residues Ala-488–Val-653 are cytoplasmic. An STAS domain is found at Gln-522–Cys-645.

The protein belongs to the SLC26A/SulP transporter (TC 2.A.53.1) family. As to quaternary structure, homodimer. Interacts with OASA1 through its STAS domain. Expressed in lateral root cap, root hairs, epidermal and cortical cells of roots.

Its subcellular location is the cell membrane. With respect to regulation, interaction with OASA1 negatively impacts the transporter activity. Functionally, high-affinity H(+)/sulfate cotransporter that mediates the uptake of the environmental sulfate by plant roots. Plays a central role in the regulation of sulfate assimilation. Unable to transport molybdate. The protein is Sulfate transporter 1.2 (SULTR1;2) of Arabidopsis thaliana (Mouse-ear cress).